Here is a 242-residue protein sequence, read N- to C-terminus: ATP synthase subunit a, organellar chromatophore (242 aa).

A run of 5 helical transmembrane segments spans residues 28–48 (LHGQVFISSWVVISALLVLVI), 89–109 (LPFIGTLFLFIFGCNWGGALV), 128–148 (INTTVAMALLVSLSYFYAGLS), 193–213 (LVVGVLAFLVPILVPLPAMFL), and 214–234 (GLFTSAIQALIFATLAANYIG).

The protein belongs to the ATPase A chain family. As to quaternary structure, F-type ATPases have 2 components, CF(1) - the catalytic core - and CF(0) - the membrane proton channel. CF(1) has five subunits: alpha(3), beta(3), gamma(1), delta(1), epsilon(1). CF(0) has four main subunits: a, b, b' and c.

Its subcellular location is the plastid. The protein localises to the organellar chromatophore thylakoid membrane. Functionally, key component of the proton channel; it plays a direct role in the translocation of protons across the membrane. This Paulinella chromatophora protein is ATP synthase subunit a, organellar chromatophore.